The following is a 38-amino-acid chain: Toxic protein TimP (38 aa).

The segment at 1–20 (MKVRCFCVVLLVSGTLCLHA) is a transmembrane helix.

The protein belongs to the TimP toxin family.

The protein resides in the cell inner membrane. Toxic component of a probable type I toxin-antitoxin (TA) system. Neutralized by sRNA antitoxin TimR which binds to the 5' UTR of timP mRNA and inhibits translation. When TimP is expressed from its promoter in the absence of antitoxin leads to mild cell stress; overexpression in situ is toxic to the cell and causes membrane leakage. The antitoxin gene is encoded immediately upstream and transcribed divergently from the toxin gene; antitoxin RNA is less stable than timP mRNA. The polypeptide is Toxic protein TimP (Salmonella typhimurium (strain SL1344)).